Consider the following 320-residue polypeptide: Citrate synthase (320 aa).

Residues histidine 249 and aspartate 307 contribute to the active site.

This sequence belongs to the citrate synthase family.

The enzyme catalyses oxaloacetate + acetyl-CoA + H2O = citrate + CoA + H(+). It functions in the pathway carbohydrate metabolism; tricarboxylic acid cycle; isocitrate from oxaloacetate: step 1/2. The protein is Citrate synthase (gltA) of Bartonella doshiae.